The sequence spans 203 residues: NAD(P)H dehydrogenase (quinone) (203 aa).

The Flavodoxin-like domain occupies 3–194; sequence IMVVYYSAYG…AGANFQGRHV (192 aa). FMN contacts are provided by residues 9-14 and 82-84; these read SAYGHV and ARF. Tyr11 contributes to the NAD(+) binding site. Trp102 serves as a coordination point for substrate. Residues 117 to 123 and His138 contribute to the FMN site; that span reads STGTQHG.

This sequence belongs to the WrbA family. FMN serves as cofactor.

It catalyses the reaction a quinone + NADH + H(+) = a quinol + NAD(+). The enzyme catalyses a quinone + NADPH + H(+) = a quinol + NADP(+). The sequence is that of NAD(P)H dehydrogenase (quinone) from Syntrophus aciditrophicus (strain SB).